Reading from the N-terminus, the 300-residue chain is Solute carrier family 25 member 35 (300 aa).

Solcar repeat units lie at residues 1 to 90, 100 to 193, and 203 to 294; these read MDFL…AEAG, HSPA…TKDL, and QSWK…LRSL. Helical transmembrane passes span 38–58, 59–79, 91–119, 169–190, 205–225, and 277–300; these read TYQR…KVDG, LAAL…MNGI, GYLH…GAYL, ALGG…FSST, WKLA…AMAP, and LGPH…TDTK.

It belongs to the mitochondrial carrier (TC 2.A.29) family.

The protein localises to the mitochondrion inner membrane. It carries out the reaction a dicarboxylate(in) + sulfate(out) = a dicarboxylate(out) + sulfate(in). Its function is as follows. Putative antiporter that exchanges dicarboxylates and sulfur oxoanions across the inner membrane of mitochondria. In Homo sapiens (Human), this protein is Solute carrier family 25 member 35 (SLC25A35).